The following is a 450-amino-acid chain: Protein DA1-related 3 (450 aa).

Residues 1–46 (MVRRKRQEEDEKIEIERVKEESLKLAKQAEEKRRLEESKEQGKRIQ) are a coiled coil. 2 stretches are compositionally biased toward basic and acidic residues: residues 27-47 (KQAE…RIQV) and 56-69 (TSKD…SKDV). Positions 27-87 (KQAEEKRRLE…PSIDGKSEIG (61 aa)) are disordered.

The polypeptide is Protein DA1-related 3 (DAR3) (Arabidopsis thaliana (Mouse-ear cress)).